The following is a 25-amino-acid chain: Pregnancy-associated glycoprotein 59g (25 aa).

An N-linked (GlcNAc...) asparagine glycan is attached at Asn4.

Belongs to the peptidase A1 family. As to expression, highly expressed in the placenta between day 60 and day 100 of gestation.

Its subcellular location is the secreted. It is found in the extracellular space. The chain is Pregnancy-associated glycoprotein 59g from Ovis aries (Sheep).